Consider the following 504-residue polypeptide: Maturase K (504 aa).

It belongs to the intron maturase 2 family. MatK subfamily.

The protein localises to the plastid. The protein resides in the chloroplast. In terms of biological role, usually encoded in the trnK tRNA gene intron. Probably assists in splicing its own and other chloroplast group II introns. This Guizotia abyssinica (Niger) protein is Maturase K.